Consider the following 204-residue polypeptide: UPF0637 protein USA300HOU_1046.1 (204 aa).

It belongs to the UPF0637 family.

This chain is UPF0637 protein USA300HOU_1046.1, found in Staphylococcus aureus (strain USA300 / TCH1516).